Here is a 433-residue protein sequence, read N- to C-terminus: Pyrimidine-nucleoside phosphorylase (433 aa).

81–83 serves as a coordination point for phosphate; sequence KHS. K(+) contacts are provided by glycine 88 and threonine 90. Residues threonine 92, 108–110, and threonine 120 each bind phosphate; that span reads KMS. 2 residues coordinate substrate: arginine 168 and lysine 187. K(+) contacts are provided by leucine 243, alanine 246, and glutamate 255.

The protein belongs to the thymidine/pyrimidine-nucleoside phosphorylase family. Homodimer. It depends on K(+) as a cofactor.

The catalysed reaction is uridine + phosphate = alpha-D-ribose 1-phosphate + uracil. The enzyme catalyses thymidine + phosphate = 2-deoxy-alpha-D-ribose 1-phosphate + thymine. It catalyses the reaction 2'-deoxyuridine + phosphate = 2-deoxy-alpha-D-ribose 1-phosphate + uracil. Catalyzes phosphorolysis of the pyrimidine nucleosides uridine, thymidine and 2'-deoxyuridine with the formation of the corresponding pyrimidine base and ribose-1-phosphate. The chain is Pyrimidine-nucleoside phosphorylase (pdp) from Staphylococcus aureus (strain bovine RF122 / ET3-1).